Reading from the N-terminus, the 392-residue chain is Chaperone protein DnaJ 1 (392 aa).

Residues 4-67 form the J domain; it reads DYYEILGVSH…QKRAVFDRGG (64 aa). The CR-type zinc finger occupies 134-216; the sequence is GVTKSLEVDT…CSGEGRVRTT (83 aa). 8 residues coordinate Zn(2+): cysteine 147, cysteine 150, cysteine 164, cysteine 167, cysteine 190, cysteine 193, cysteine 204, and cysteine 207. CXXCXGXG motif repeat units follow at residues 147–154, 164–171, 190–197, and 204–211; these read CPKCQGKG, CDTCQGRG, CPTCHGYG, and CQECSGEG. The tract at residues 367–392 is disordered; the sequence is ETNASASVEKSGGRGMFSRIKEAFGG.

Belongs to the DnaJ family. In terms of assembly, homodimer. The cofactor is Zn(2+).

The protein resides in the cytoplasm. Functionally, participates actively in the response to hyperosmotic and heat shock by preventing the aggregation of stress-denatured proteins and by disaggregating proteins, also in an autonomous, DnaK-independent fashion. Unfolded proteins bind initially to DnaJ; upon interaction with the DnaJ-bound protein, DnaK hydrolyzes its bound ATP, resulting in the formation of a stable complex. GrpE releases ADP from DnaK; ATP binding to DnaK triggers the release of the substrate protein, thus completing the reaction cycle. Several rounds of ATP-dependent interactions between DnaJ, DnaK and GrpE are required for fully efficient folding. Also involved, together with DnaK and GrpE, in the DNA replication of plasmids through activation of initiation proteins. This Cutibacterium acnes (strain DSM 16379 / KPA171202) (Propionibacterium acnes) protein is Chaperone protein DnaJ 1.